The chain runs to 221 residues: 7-cyano-7-deazaguanine synthase (221 aa).

ATP is bound at residue 7–17; sequence LSGGMDSTTLL. Zn(2+) contacts are provided by Cys183, Cys191, Cys194, and Cys197.

The protein belongs to the QueC family. As to quaternary structure, homodimer. Zn(2+) serves as cofactor.

The catalysed reaction is 7-carboxy-7-deazaguanine + NH4(+) + ATP = 7-cyano-7-deazaguanine + ADP + phosphate + H2O + H(+). The protein operates within purine metabolism; 7-cyano-7-deazaguanine biosynthesis. Catalyzes the ATP-dependent conversion of 7-carboxy-7-deazaguanine (CDG) to 7-cyano-7-deazaguanine (preQ(0)). The protein is 7-cyano-7-deazaguanine synthase of Caldicellulosiruptor bescii (strain ATCC BAA-1888 / DSM 6725 / KCTC 15123 / Z-1320) (Anaerocellum thermophilum).